The sequence spans 668 residues: S-adenosyl-L-methionine-dependent tRNA 4-demethylwyosine synthase TYW1B (668 aa).

The Flavodoxin-like domain occupies 37 to 191; the sequence is CVQIVIEMQG…NFRAWKTKFI (155 aa). FMN is bound by residues 43–47 and 130–162; these read EMQGF and VFGL…HRVM. Residues 202 to 269 form a disordered region; that stretch reads RKKSCGGHCK…QSLNSIVDVE (68 aa). Basic and acidic residues-rich tracts occupy residues 213 to 223 and 233 to 243; these read GKCESHQHGSE and DELHHRDTKEE. Residues 244–255 show a composition bias toward acidic residues; sequence EPFESSSEEEFG. A Radical SAM core domain is found at 336-580; the sequence is LWNESHRCME…VDLIPEYEIA (245 aa). Positions 352, 356, and 359 each coordinate [4Fe-4S] cluster.

This sequence belongs to the TYW1 family. It depends on [4Fe-4S] cluster as a cofactor.

The enzyme catalyses N(1)-methylguanosine(37) in tRNA(Phe) + pyruvate + S-adenosyl-L-methionine = 4-demethylwyosine(37) in tRNA(Phe) + 5'-deoxyadenosine + L-methionine + CO2 + H2O. The protein operates within tRNA modification; wybutosine-tRNA(Phe) biosynthesis. Functionally, probable component of the wybutosine biosynthesis pathway. Wybutosine is a hyper modified guanosine with a tricyclic base found at the 3'-position adjacent to the anticodon of eukaryotic phenylalanine tRNA. Catalyzes the condensation of N-methylguanine with 2 carbon atoms from pyruvate to form the tricyclic 4-demethylwyosine, an intermediate in wybutosine biosynthesis. This chain is S-adenosyl-L-methionine-dependent tRNA 4-demethylwyosine synthase TYW1B (TYW1B), found in Homo sapiens (Human).